The chain runs to 518 residues: GMP synthase [glutamine-hydrolyzing] (518 aa).

Residues 8–201 (TVLIIDFGSQ…VCKISGIKNN (194 aa)) form the Glutamine amidotransferase type-1 domain. C85 functions as the Nucleophile in the catalytic mechanism. Catalysis depends on residues H175 and E177. A GMPS ATP-PPase domain is found at 202–393 (WSMAAYRDQA…LGLPEEFIKR (192 aa)). 229-235 (SGGVDSS) is an ATP binding site.

In terms of assembly, homodimer.

The enzyme catalyses XMP + L-glutamine + ATP + H2O = GMP + L-glutamate + AMP + diphosphate + 2 H(+). It participates in purine metabolism; GMP biosynthesis; GMP from XMP (L-Gln route): step 1/1. Its function is as follows. Catalyzes the synthesis of GMP from XMP. The polypeptide is GMP synthase [glutamine-hydrolyzing] (Bartonella bacilliformis (strain ATCC 35685 / KC583 / Herrer 020/F12,63)).